The following is a 60-amino-acid chain: DNA-directed RNA polymerase subunit Rpo6 (60 aa).

It belongs to the archaeal Rpo6/eukaryotic RPB6 RNA polymerase subunit family. In terms of assembly, part of the RNA polymerase complex.

It localises to the cytoplasm. It catalyses the reaction RNA(n) + a ribonucleoside 5'-triphosphate = RNA(n+1) + diphosphate. Functionally, DNA-dependent RNA polymerase (RNAP) catalyzes the transcription of DNA into RNA using the four ribonucleoside triphosphates as substrates. The polypeptide is DNA-directed RNA polymerase subunit Rpo6 (Picrophilus torridus (strain ATCC 700027 / DSM 9790 / JCM 10055 / NBRC 100828 / KAW 2/3)).